The primary structure comprises 303 residues: Histone deacetylase HDT2 (303 aa).

Acidic residues predominate over residues 100–112; it reads EMDLDSEDEEEEL. Positions 100–282 are disordered; it reads EMDLDSEDEE…SGGSVPCKSC (183 aa). The segment covering 119–133 has biased composition (basic and acidic residues); that stretch reads ENGKADGKEEQKNQE. Over residues 154 to 203 the composition is skewed to acidic residues; it reads DSDDSDEDESDDSDEDDSDDSDEGEGLSPDEGDDDSSDEDDTSDDDEEET. Residues 204 to 217 are compositionally biased toward basic and acidic residues; that stretch reads PTPKKPEAGKKRGA. The segment at 277 to 300 adopts a C2H2-type zinc-finger fold; the sequence is VPCKSCSKTFNSEMALQAHSKAKH.

Belongs to the histone deacetylase HD2 family. In terms of assembly, multimer. Possibly forms a homotrimer with HDT1 and/or HDT3.

The protein localises to the nucleus. It is found in the nucleolus. Functionally, mediates the deacetylation of lysine residues on the N-terminal part of the core histones (H2A, H2B, H3 and H4). Histone deacetylation gives a tag for epigenetic repression and plays an important role in transcriptional regulation, cell cycle progression and developmental events. In Zea mays (Maize), this protein is Histone deacetylase HDT2 (HDT2).